Reading from the N-terminus, the 194-residue chain is Imidazoleglycerol-phosphate dehydratase (194 aa).

Belongs to the imidazoleglycerol-phosphate dehydratase family.

The protein localises to the cytoplasm. It carries out the reaction D-erythro-1-(imidazol-4-yl)glycerol 3-phosphate = 3-(imidazol-4-yl)-2-oxopropyl phosphate + H2O. The protein operates within amino-acid biosynthesis; L-histidine biosynthesis; L-histidine from 5-phospho-alpha-D-ribose 1-diphosphate: step 6/9. The chain is Imidazoleglycerol-phosphate dehydratase from Streptococcus thermophilus (strain ATCC BAA-491 / LMD-9).